The chain runs to 334 residues: Protein-methionine-sulfoxide reductase catalytic subunit MsrP (334 aa).

A signal peptide (tat-type signal) is located at residues 1 to 44; sequence MKKNQFLKESDVTAESVFFMKRRQVLKALGISAAAFSLPHAAHA. Mo-molybdopterin is bound by residues N88, 91 to 92, C146, T181, N233, R238, and 249 to 251; these read YE and GIK.

Belongs to the MsrP family. In terms of assembly, heterodimer of a catalytic subunit (MsrP) and a heme-binding subunit (MsrQ). Mo-molybdopterin is required as a cofactor. In terms of processing, predicted to be exported by the Tat system. The position of the signal peptide cleavage has not been experimentally proven.

The protein resides in the periplasm. The catalysed reaction is L-methionyl-[protein] + a quinone + H2O = L-methionyl-(S)-S-oxide-[protein] + a quinol. It carries out the reaction L-methionyl-[protein] + a quinone + H2O = L-methionyl-(R)-S-oxide-[protein] + a quinol. In terms of biological role, part of the MsrPQ system that repairs oxidized periplasmic proteins containing methionine sulfoxide residues (Met-O), using respiratory chain electrons. Thus protects these proteins from oxidative-stress damage caused by reactive species of oxygen and chlorine generated by the host defense mechanisms. MsrPQ is essential for the maintenance of envelope integrity under bleach stress, rescuing a wide series of structurally unrelated periplasmic proteins from methionine oxidation, including the primary periplasmic chaperone SurA and the lipoprotein Pal. The catalytic subunit MsrP is non-stereospecific, being able to reduce both (R-) and (S-) diastereoisomers of methionine sulfoxide. This chain is Protein-methionine-sulfoxide reductase catalytic subunit MsrP, found in Escherichia coli O6:H1 (strain CFT073 / ATCC 700928 / UPEC).